Consider the following 120-residue polypeptide: Small ribosomal subunit protein eS24 (120 aa).

The tract at residues 101 to 120 is disordered; it reads RDAGTKQKKGGSKGGQGAKG.

This sequence belongs to the eukaryotic ribosomal protein eS24 family.

The chain is Small ribosomal subunit protein eS24 from Saccharolobus islandicus (strain M.16.27) (Sulfolobus islandicus).